The primary structure comprises 276 residues: F420-dependent methylenetetrahydromethanopterin dehydrogenase (276 aa).

The disordered stretch occupies residues 253–276 (TVLRTPHGKEGKTLSKKDLLAKPE). Residues 259–276 (HGKEGKTLSKKDLLAKPE) are compositionally biased toward basic and acidic residues.

The protein belongs to the MTD family. In terms of assembly, found to be tightly associated with methyl-coenzyme M methylreductase.

The catalysed reaction is 5,10-methylenetetrahydromethanopterin + oxidized coenzyme F420-(gamma-L-Glu)(n) + 2 H(+) = 5,10-methenyl-5,6,7,8-tetrahydromethanopterin + reduced coenzyme F420-(gamma-L-Glu)(n). It participates in one-carbon metabolism; methanogenesis from CO(2); 5,10-methylene-5,6,7,8-tetrahydromethanopterin from 5,10-methenyl-5,6,7,8-tetrahydromethanopterin (coenzyme F420 route): step 1/1. With respect to regulation, activity requires salt; 100 mM sodium or potassium salts of chloride, phosphate or sulfate are equally effective. Not inactivated by O(2). Inhibited by hydrogen-producing 5,10-methenyltetrahydromethanopterin hydrogenase which has a higher affinity for their shared substrate. Enzyme is O(2)-stable and strictly dependent on coenzyme F420. In terms of biological role, catalyzes the reversible reduction of methenyl-H(4)MPT(+) to methylene-H(4)MPT. The sequence is that of F420-dependent methylenetetrahydromethanopterin dehydrogenase from Methanothermobacter marburgensis (strain ATCC BAA-927 / DSM 2133 / JCM 14651 / NBRC 100331 / OCM 82 / Marburg) (Methanobacterium thermoautotrophicum).